Here is a 174-residue protein sequence, read N- to C-terminus: MTTIVSVRRNNQVVIAGDGQVSLGNTVMKGNARKVRRLYHNKVLAGFAGGTADAFTLFERFEAKLEMHQGHLMKAAVEMAKDWRSDKMLRKLEALLAVADDTCSLIITGNGDVVQPENDLISIGSGGNFAQSAATALLENTELSALEIAEKSLTIAGDICVFTNQFKTIEELNY.

Residue Thr2 is part of the active site. Gly157, Cys160, and Thr163 together coordinate Na(+).

Belongs to the peptidase T1B family. HslV subfamily. A double ring-shaped homohexamer of HslV is capped on each side by a ring-shaped HslU homohexamer. The assembly of the HslU/HslV complex is dependent on binding of ATP.

The protein localises to the cytoplasm. The enzyme catalyses ATP-dependent cleavage of peptide bonds with broad specificity.. With respect to regulation, allosterically activated by HslU binding. Functionally, protease subunit of a proteasome-like degradation complex believed to be a general protein degrading machinery. In Shewanella sediminis (strain HAW-EB3), this protein is ATP-dependent protease subunit HslV.